Reading from the N-terminus, the 183-residue chain is uncharacterized protein (183 aa).

This is an uncharacterized protein from Methanocaldococcus jannaschii (strain ATCC 43067 / DSM 2661 / JAL-1 / JCM 10045 / NBRC 100440) (Methanococcus jannaschii).